A 449-amino-acid polypeptide reads, in one-letter code: Na(+)/H(+) antiporter NhaA 2 (449 aa).

A run of 11 helical transmembrane segments spans residues 32 to 52 (IEAT…TLSN), 87 to 107 (GLMT…VVLG), 114 to 134 (MVAL…GLYL), 145 to 165 (GWGV…ALLG), 174 to 194 (VFLL…VAVG), 202 to 222 (TALA…LLGV), 233 to 253 (AIIW…GVIL), 318 to 338 (WVAF…PITI), 347 to 367 (LAVM…FAWL), 382 to 402 (WGGL…ALFI), and 417 to 437 (LGIL…LCAL).

It belongs to the NhaA Na(+)/H(+) (TC 2.A.33) antiporter family.

The protein localises to the cell inner membrane. It carries out the reaction Na(+)(in) + 2 H(+)(out) = Na(+)(out) + 2 H(+)(in). Na(+)/H(+) antiporter that extrudes sodium in exchange for external protons. This Acidiphilium cryptum (strain JF-5) protein is Na(+)/H(+) antiporter NhaA 2.